A 274-amino-acid chain; its full sequence is Probable glycerophosphodiester phosphodiesterase 1 (274 aa).

Residues 12–264 (PFVVAHRGAS…HHPGRTKAWL (253 aa)) form the GP-PDE domain. The active-site Proton acceptor is the His-17. Residues Glu-44 and Asp-46 each contribute to the Ca(2+) site. Catalysis depends on His-59, which acts as the Proton donor. Glu-126 is a binding site for Ca(2+).

The protein belongs to the glycerophosphoryl diester phosphodiesterase family. The cofactor is Ca(2+).

It catalyses the reaction a sn-glycero-3-phosphodiester + H2O = an alcohol + sn-glycerol 3-phosphate + H(+). In terms of biological role, glycerophosphodiester phosphodiesterase hydrolyzes glycerophosphodiesters into glycerol-3-phosphate (G3P) and the corresponding alcohol. The protein is Probable glycerophosphodiester phosphodiesterase 1 (glpQ1) of Mycobacterium tuberculosis (strain CDC 1551 / Oshkosh).